Here is a 543-residue protein sequence, read N- to C-terminus: Formin-binding protein 1-like (543 aa).

The 263-residue stretch at 1–263 folds into the F-BAR domain; the sequence is MSWGTELWDQ…AAKSVDERRD (263 aa). Coiled-coil stretches lie at residues 66 to 258 and 334 to 426; these read FTSC…AKSV and LEDF…QRSE. One can recognise an REM-1 domain in the interval 339 to 416; that stretch reads HLPPEQRRKR…IHKNEGWLSE (78 aa). The interval 424 to 467 is disordered; sequence RSERRHSAEANHLVAQGRESPEGSYTEDANQEGRVQPQHHAHPE. The SH3 domain maps to 479-540; it reads PAIGHCKSLY…PTSYIEITLE (62 aa).

This sequence belongs to the FNBP1 family. Homodimerizes, the dimers can polymerize end-to-end to form filamentous structures. Interacts with GTP-bound cdc42 and wasl/n-wasp.

Its subcellular location is the cytoplasm. It is found in the cytoskeleton. The protein localises to the cell cortex. It localises to the cytoplasmic vesicle. The protein resides in the cell membrane. Functionally, required to coordinate membrane tubulation with reorganization of the actin cytoskeleton during endocytosis. Essential for autophagy of intracellular bacterial pathogens. Promotes cdc42-induced actin polymerization by activating the wasl-waspip complex, the predominant form of wasl/n-wasp in cells. In Xenopus laevis (African clawed frog), this protein is Formin-binding protein 1-like (fnbp1l).